The sequence spans 255 residues: NAD-dependent protein deacylase (255 aa).

Residues 1–253 (MEFSDELLAS…PLLLQALRRS (253 aa)) enclose the Deacetylase sirtuin-type domain. An NAD(+)-binding site is contributed by 22–42 (GAGVSAESGIPTFRDALTGFW). The substrate site is built by Tyr67 and Arg70. Residue 101-104 (QNVD) coordinates NAD(+). His119 serves as the catalytic Proton acceptor. Residues Cys127, Cys130, Cys155, and Cys158 each contribute to the Zn(2+) site. Residues 195–197 (GTS), 221–223 (NPA), and Ala239 each bind NAD(+).

The protein belongs to the sirtuin family. Class III subfamily. Requires Zn(2+) as cofactor.

It localises to the cytoplasm. The catalysed reaction is N(6)-acetyl-L-lysyl-[protein] + NAD(+) + H2O = 2''-O-acetyl-ADP-D-ribose + nicotinamide + L-lysyl-[protein]. It catalyses the reaction N(6)-succinyl-L-lysyl-[protein] + NAD(+) + H2O = 2''-O-succinyl-ADP-D-ribose + nicotinamide + L-lysyl-[protein]. In terms of biological role, NAD-dependent lysine deacetylase and desuccinylase that specifically removes acetyl and succinyl groups on target proteins. Modulates the activities of several proteins which are inactive in their acylated form. In Methylococcus capsulatus (strain ATCC 33009 / NCIMB 11132 / Bath), this protein is NAD-dependent protein deacylase.